A 680-amino-acid chain; its full sequence is Oligopeptidase A (680 aa).

His-469 serves as a coordination point for Zn(2+). Glu-470 is a catalytic residue. Zn(2+)-binding residues include His-473 and His-476.

The protein belongs to the peptidase M3 family. It depends on Zn(2+) as a cofactor.

It carries out the reaction Hydrolysis of oligopeptides, with broad specificity. Gly or Ala commonly occur as P1 or P1' residues, but more distant residues are also important, as is shown by the fact that Z-Gly-Pro-Gly-|-Gly-Pro-Ala is cleaved, but not Z-(Gly)(5).. May play a specific role in the degradation of signal peptides after they are released from precursor forms of secreted proteins. Can cleave N-acetyl-L-Ala(4). This is Oligopeptidase A (prlC) from Salmonella typhimurium (strain LT2 / SGSC1412 / ATCC 700720).